The chain runs to 461 residues: Juvenile hormone epoxide hydrolase (461 aa).

Residues 4–24 (LLFIALPLLVLASIPLYLLVL) traverse the membrane as a helical segment. The active-site Nucleophile is the Asp-227. The active-site Proton donor is Tyr-373. His-430 functions as the Proton acceptor in the catalytic mechanism.

The protein belongs to the peptidase S33 family. As to quaternary structure, homodimer. As to expression, expressed in fat body, foregut and midgut but not in brain, subesophageal ganglia or silk gland of larvae on day 1 of fifth instar.

The protein resides in the microsome membrane. It localises to the endoplasmic reticulum membrane. The catalysed reaction is cis-stilbene oxide + H2O = (1R,2R)-hydrobenzoin. It catalyses the reaction 1-(4-methoxyphenyl)-N-methyl-N-[(3-methyloxetan-3-yl)methyl]methanamine + H2O = 2-{[(4-methoxybenzyl)(methyl)amino]methyl}-2-methylpropane-1,3-diol. Its function is as follows. Catalyzes juvenile hormone hydrolysis. Degrades juvenile hormone III (JH III) about 3 times and 5 times slower than juvenile hormone I (JH I) and II (JH II), respectively. Degrades cis-stilbene oxide and trans-stilbene oxide about 18 and 43 times slower than JH III, respectively. The chain is Juvenile hormone epoxide hydrolase from Bombyx mori (Silk moth).